Reading from the N-terminus, the 139-residue chain is MLERIGISLEDGLLEQFDKLIAEKGYVNRSEAVRDLIRDALVQRAFTESSGREERVAVVTLVYDHDSSSLAQKLAHIQHENHRAVVSALHVHMDAHNCLEVLVLRGRGKDVVAMGESLVATKGVKYGKLVPATAGHDLR.

Positions 79, 90, 92, and 98 each coordinate Ni(2+).

The protein belongs to the transcriptional regulatory CopG/NikR family. It depends on Ni(2+) as a cofactor.

In terms of biological role, transcriptional regulator. The sequence is that of Putative nickel-responsive regulator from Anaeromyxobacter dehalogenans (strain 2CP-C).